The sequence spans 478 residues: Trigger factor (478 aa).

The span at 154–167 shows a compositional bias: basic and acidic residues; sequence MAKDSRSFEPREEG. Disordered regions lie at residues 154 to 173 and 444 to 478; these read MAKD…AQSG and LFAE…KAAG. Residues 173–258 enclose the PPIase FKBP-type domain; the sequence is GDRVTIDFVG…VKAVAAPGET (86 aa).

This sequence belongs to the FKBP-type PPIase family. Tig subfamily.

The protein resides in the cytoplasm. The enzyme catalyses [protein]-peptidylproline (omega=180) = [protein]-peptidylproline (omega=0). Functionally, involved in protein export. Acts as a chaperone by maintaining the newly synthesized protein in an open conformation. Functions as a peptidyl-prolyl cis-trans isomerase. This is Trigger factor from Methylorubrum populi (strain ATCC BAA-705 / NCIMB 13946 / BJ001) (Methylobacterium populi).